Here is a 188-residue protein sequence, read N- to C-terminus: Elongation factor P-like protein (188 aa).

The protein belongs to the elongation factor P family.

The chain is Elongation factor P-like protein from Xanthomonas campestris pv. campestris (strain 8004).